We begin with the raw amino-acid sequence, 514 residues long: 1,25-dihydroxyvitamin D(3) 24-hydroxylase, mitochondrial (514 aa).

Residues 1-35 constitute a mitochondrion transit peptide; that stretch reads MSCPIDKRRTLIAFLRRLRDLGQPPRSVTSKASAS. A heme-binding site is contributed by cysteine 462.

Belongs to the cytochrome P450 family. It depends on heme as a cofactor.

Its subcellular location is the mitochondrion. The catalysed reaction is calcitriol + 2 reduced [adrenodoxin] + O2 + 2 H(+) = calcitetrol + 2 oxidized [adrenodoxin] + H2O. The enzyme catalyses calcitetrol + 2 reduced [adrenodoxin] + O2 + 2 H(+) = (1S)-1,25-dihydroxy-24-oxocalciol + 2 oxidized [adrenodoxin] + 2 H2O. It carries out the reaction (1S)-1,25-dihydroxy-24-oxocalciol + 2 reduced [adrenodoxin] + O2 + 2 H(+) = (1S)-1,23,25-trihydroxy-24-oxocalciol + 2 oxidized [adrenodoxin] + H2O. It catalyses the reaction (1S)-1,23-dihydroxy-24,25,26,27-tetranorcalciol + 2 reduced [adrenodoxin] + O2 + 2 H(+) = (1S)-1-hydroxy-23-oxo-24,25,26,27-tetranorcalciol + 2 oxidized [adrenodoxin] + 2 H2O. The catalysed reaction is (1S)-1-hydroxy-23-oxo-24,25,26,27-tetranorcalciol + 2 reduced [adrenodoxin] + O2 + H(+) = calcitroate + 2 oxidized [adrenodoxin] + H2O. The enzyme catalyses calcidiol + 2 reduced [adrenodoxin] + O2 + 2 H(+) = secalciferol + 2 oxidized [adrenodoxin] + H2O. It carries out the reaction secalciferol + 2 reduced [adrenodoxin] + O2 + 2 H(+) = 25-hydroxy-24-oxocalciol + 2 oxidized [adrenodoxin] + 2 H2O. It catalyses the reaction 25-hydroxy-24-oxocalciol + 2 reduced [adrenodoxin] + O2 + 2 H(+) = 23S,25-dihydroxy-24-oxocholecalciferol + 2 oxidized [adrenodoxin] + H2O. The catalysed reaction is 20S,23-dihydroxycholecalciferol + 2 reduced [adrenodoxin] + O2 + 2 H(+) = 20S,23,25-trihydroxycholecalciferol + 2 oxidized [adrenodoxin] + H2O. The enzyme catalyses 20S,23-dihydroxycholecalciferol + 2 reduced [adrenodoxin] + O2 + 2 H(+) = 20S,23,24-trihydroxycholecalciferol + 2 oxidized [adrenodoxin] + H2O. It carries out the reaction 20S-hydroxycholecalciferol + 2 reduced [adrenodoxin] + O2 + 2 H(+) = 20S,25-dihydroxycholecalciferol + 2 oxidized [adrenodoxin] + H2O. It catalyses the reaction 20S-hydroxycholecalciferol + 2 reduced [adrenodoxin] + O2 + 2 H(+) = 20S,24S-dihydroxycholecalciferol + 2 oxidized [adrenodoxin] + H2O. The catalysed reaction is 20S-hydroxycholecalciferol + 2 reduced [adrenodoxin] + O2 + 2 H(+) = 20S,24R-dihydroxycholecalciferol + 2 oxidized [adrenodoxin] + H2O. Its function is as follows. A cytochrome P450 monooxygenase with a key role in vitamin D catabolism and calcium homeostasis. Via C24-oxidation pathway, catalyzes the inactivation of both the vitamin D precursor calcidiol (25-hydroxyvitamin D(3)) and the active hormone calcitriol (1-alpha,25-dihydroxyvitamin D(3)). With initial hydroxylation at C-24 (via C24-oxidation pathway), performs a sequential 6-step oxidation of calcitriol leading to the formation of the biliary metabolite calcitroic acid. Hydroxylates at C-24 or C-25 other vitamin D active metabolites, such as CYP11A1-derived secosteroids 20S-hydroxycholecalciferol and 20S,23-dihydroxycholecalciferol. Mechanistically, uses molecular oxygen inserting one oxygen atom into a substrate, and reducing the second into a water molecule, with two electrons provided by NADPH via FDXR/adrenodoxin reductase and FDX1/adrenodoxin. The polypeptide is 1,25-dihydroxyvitamin D(3) 24-hydroxylase, mitochondrial (Cyp24a1) (Rattus norvegicus (Rat)).